The primary structure comprises 999 residues: Disks large-associated protein 1 (999 aa).

3 disordered regions span residues His155–Ser213, Met395–Ala418, and Asn918–Glu989. Basic and acidic residues predominate over residues Arg194–Asn204. 2 stretches are compositionally biased toward basic and acidic residues: residues Asp923 to Leu932 and Leu947 to Lys965. The span at Val976 to Ala985 shows a compositional bias: polar residues. Positions Thr997–Leu999 match the PDZ-binding motif.

Belongs to the SAPAP family.

Its subcellular location is the cell membrane. It localises to the postsynaptic density. The protein resides in the synapse. Its function is as follows. Part of the postsynaptic scaffold in neuronal cells. The protein is Disks large-associated protein 1 of Danio rerio (Zebrafish).